The chain runs to 422 residues: Tyrosine--tRNA ligase (422 aa).

Residue Tyr-35 coordinates L-tyrosine. The 'HIGH' region signature appears at 40–49; the sequence is PTAPSLHLGN. L-tyrosine is bound by residues Tyr-170 and Gln-174. The 'KMSKS' region signature appears at 231-235; that stretch reads KFGKT. Position 234 (Lys-234) interacts with ATP. An S4 RNA-binding domain is found at 353–419; that stretch reads APVVDLFAEV…GKKNLAAVEV (67 aa).

This sequence belongs to the class-I aminoacyl-tRNA synthetase family. TyrS type 1 subfamily. Homodimer.

Its subcellular location is the cytoplasm. It carries out the reaction tRNA(Tyr) + L-tyrosine + ATP = L-tyrosyl-tRNA(Tyr) + AMP + diphosphate + H(+). In terms of biological role, catalyzes the attachment of tyrosine to tRNA(Tyr) in a two-step reaction: tyrosine is first activated by ATP to form Tyr-AMP and then transferred to the acceptor end of tRNA(Tyr). The chain is Tyrosine--tRNA ligase from Streptomyces avermitilis (strain ATCC 31267 / DSM 46492 / JCM 5070 / NBRC 14893 / NCIMB 12804 / NRRL 8165 / MA-4680).